A 228-amino-acid chain; its full sequence is UPF0758 protein CKR_0778 (228 aa).

One can recognise an MPN domain in the interval Arg106–Leu228. 3 residues coordinate Zn(2+): His177, His179, and Asp190. A JAMM motif motif is present at residues His177 to Asp190.

This sequence belongs to the UPF0758 family.

This Clostridium kluyveri (strain NBRC 12016) protein is UPF0758 protein CKR_0778.